The sequence spans 412 residues: Phosphoribosylamine--glycine ligase (412 aa).

The region spanning 108–309 is the ATP-grasp domain; sequence KSIMKKYGVP…LAQAIIDILA (202 aa). Position 134–190 (134–190) interacts with ATP; the sequence is LDEKGVPLVIKADGLAAGKGVTVAFDIETAKSALADIFSGSQGKVVIEEFLDGEEFS. Mg(2+) is bound by residues E279 and N281.

Belongs to the GARS family. Mg(2+) serves as cofactor. The cofactor is Mn(2+).

It carries out the reaction 5-phospho-beta-D-ribosylamine + glycine + ATP = N(1)-(5-phospho-beta-D-ribosyl)glycinamide + ADP + phosphate + H(+). It participates in purine metabolism; IMP biosynthesis via de novo pathway; N(1)-(5-phospho-D-ribosyl)glycinamide from 5-phospho-alpha-D-ribose 1-diphosphate: step 2/2. This Lactococcus lactis subsp. lactis (strain IL1403) (Streptococcus lactis) protein is Phosphoribosylamine--glycine ligase.